The following is a 240-amino-acid chain: UDP-2,3-diacylglucosamine hydrolase (240 aa).

Residues Asp-9, His-11, Asp-43, Asn-81, and His-116 each contribute to the Mn(2+) site. 81-82 is a substrate binding site; the sequence is NR. Substrate contacts are provided by Asp-124, Ser-162, Lys-166, Lys-169, and His-197. Residues His-197 and His-199 each contribute to the Mn(2+) site.

Belongs to the LpxH family. Requires Mn(2+) as cofactor.

Its subcellular location is the cell inner membrane. The catalysed reaction is UDP-2-N,3-O-bis[(3R)-3-hydroxytetradecanoyl]-alpha-D-glucosamine + H2O = 2-N,3-O-bis[(3R)-3-hydroxytetradecanoyl]-alpha-D-glucosaminyl 1-phosphate + UMP + 2 H(+). Its pathway is glycolipid biosynthesis; lipid IV(A) biosynthesis; lipid IV(A) from (3R)-3-hydroxytetradecanoyl-[acyl-carrier-protein] and UDP-N-acetyl-alpha-D-glucosamine: step 4/6. In terms of biological role, hydrolyzes the pyrophosphate bond of UDP-2,3-diacylglucosamine to yield 2,3-diacylglucosamine 1-phosphate (lipid X) and UMP by catalyzing the attack of water at the alpha-P atom. Involved in the biosynthesis of lipid A, a phosphorylated glycolipid that anchors the lipopolysaccharide to the outer membrane of the cell. This chain is UDP-2,3-diacylglucosamine hydrolase, found in Neisseria meningitidis serogroup C (strain 053442).